The primary structure comprises 138 residues: Putative nickel-responsive regulator (138 aa).

Ni(2+)-binding residues include His-76, His-87, His-89, and Cys-95.

The protein belongs to the transcriptional regulatory CopG/NikR family. Ni(2+) is required as a cofactor.

Functionally, transcriptional regulator. The chain is Putative nickel-responsive regulator from Pseudomonas putida (strain ATCC 47054 / DSM 6125 / CFBP 8728 / NCIMB 11950 / KT2440).